The sequence spans 232 residues: Ribonuclease 3 (232 aa).

Positions 6 to 135 (QDYLAKTYGI…FIGALYLDQG (130 aa)) constitute an RNase III domain. E48 contributes to the Mg(2+) binding site. Residue D52 is part of the active site. D121 and E124 together coordinate Mg(2+). The active site involves E124. Residues 161–230 (DAKTSLQEFL…AKHALEKLRM (70 aa)) form the DRBM domain.

It belongs to the ribonuclease III family. Homodimer. Mg(2+) is required as a cofactor.

It is found in the cytoplasm. It carries out the reaction Endonucleolytic cleavage to 5'-phosphomonoester.. In terms of biological role, digests double-stranded RNA. Involved in the processing of primary rRNA transcript to yield the immediate precursors to the large and small rRNAs (23S and 16S). Processes some mRNAs, and tRNAs when they are encoded in the rRNA operon. Processes pre-crRNA and tracrRNA of type II CRISPR loci if present in the organism. This Limosilactobacillus fermentum (strain NBRC 3956 / LMG 18251) (Lactobacillus fermentum) protein is Ribonuclease 3.